The following is a 198-amino-acid chain: Formate-dependent nitrite reductase complex subunit NrfG (198 aa).

TPR repeat units lie at residues 73 to 106 and 144 to 177; these read SEQWALLGEYYLWQNDYSNSLLAYRQALQLRGEN and ITALMLLASDAFMQANYAQAIELWQKVMDLNSPR.

In terms of biological role, required for formate-dependent nitrite reduction. Not required for the biosynthesis of any of the c-type cytochromes nor for the secretion of the periplasmic cytochromes. This Escherichia coli O157:H7 protein is Formate-dependent nitrite reductase complex subunit NrfG (nrfG).